A 142-amino-acid chain; its full sequence is Large ribosomal subunit protein uL13 (142 aa).

The protein belongs to the universal ribosomal protein uL13 family. As to quaternary structure, part of the 50S ribosomal subunit.

This protein is one of the early assembly proteins of the 50S ribosomal subunit, although it is not seen to bind rRNA by itself. It is important during the early stages of 50S assembly. In Shewanella putrefaciens (strain CN-32 / ATCC BAA-453), this protein is Large ribosomal subunit protein uL13.